Here is a 364-residue protein sequence, read N- to C-terminus: GDSL esterase/lipase 7 (364 aa).

Residues 1 to 19 form the signal peptide; that stretch reads MKSLLICLVLLELVWLGNG. Serine 37 serves as the catalytic Nucleophile. Residues asparagine 236, asparagine 237, and asparagine 264 are each glycosylated (N-linked (GlcNAc...) asparagine). Catalysis depends on residues aspartate 329 and histidine 332. An N-linked (GlcNAc...) asparagine glycan is attached at asparagine 351.

The protein belongs to the 'GDSL' lipolytic enzyme family.

It is found in the secreted. In Arabidopsis thaliana (Mouse-ear cress), this protein is GDSL esterase/lipase 7 (GLIP7).